Reading from the N-terminus, the 354-residue chain is NADH-quinone oxidoreductase subunit H (354 aa).

8 helical membrane-spanning segments follow: residues 23–43 (LVRAVCIILPLLLCVAYLILW), 91–111 (YIIAPLMVLMPAVAIWAVIPF), 124–144 (LLYVMAISSVGVYGVILAGWA), 162–182 (ISYEIAMGFALVTVLMVTGSL), 203–223 (ILSWNWLPLLPMFGVYFISGV), 250–270 (GMAFALFFLAEYINMIVISAL), 291–311 (IPGFFWLLIKVFLLLSVFIWL), and 330–350 (IFIPLTVGWLVVVAIWLVSPW).

It belongs to the complex I subunit 1 family. In terms of assembly, NDH-1 is composed of 14 different subunits. Subunits NuoA, H, J, K, L, M, N constitute the membrane sector of the complex.

It is found in the cell inner membrane. The enzyme catalyses a quinone + NADH + 5 H(+)(in) = a quinol + NAD(+) + 4 H(+)(out). Functionally, NDH-1 shuttles electrons from NADH, via FMN and iron-sulfur (Fe-S) centers, to quinones in the respiratory chain. The immediate electron acceptor for the enzyme in this species is believed to be ubiquinone. Couples the redox reaction to proton translocation (for every two electrons transferred, four hydrogen ions are translocated across the cytoplasmic membrane), and thus conserves the redox energy in a proton gradient. This subunit may bind ubiquinone. The protein is NADH-quinone oxidoreductase subunit H of Ralstonia pickettii (strain 12J).